The following is a 225-amino-acid chain: Pre-mRNA-splicing factor SPF27 (225 aa).

Ala-2 is subject to N-acetylalanine. Phosphoserine is present on Ser-94. Positions 138–222 (YNENLVHMIE…HGEANKENIR (85 aa)) form a coiled coil.

Belongs to the SPF27 family. In terms of assembly, component of the pre-catalytic and catalytic spliceosome complexes. Component of the postcatalytic spliceosome P complex. Component of the PRP19-CDC5L splicing complex composed of a core complex comprising a homotetramer of PRPF19, CDC5L, PLRG1 and BCAS2, and at least three less stably associated proteins CTNNBL1, CWC15 and HSPA8. Interacts directly in the complex with PRPF19, CDC5L and PLRG1. In terms of tissue distribution, ubiquitously expressed.

It localises to the nucleus. Its subcellular location is the nucleolus. In terms of biological role, required for pre-mRNA splicing as component of the activated spliceosome. Component of the PRP19-CDC5L complex that forms an integral part of the spliceosome and is required for activating pre-mRNA splicing. May have a scaffolding role in the spliceosome assembly as it contacts all other components of the core complex. The PRP19-CDC5L complex may also play a role in the response to DNA damage (DDR). In Homo sapiens (Human), this protein is Pre-mRNA-splicing factor SPF27 (BCAS2).